A 144-amino-acid polypeptide reads, in one-letter code: MNFKYIVAVSFLIASAYARSVKNDEQSLSQRDVLDEESLREFRGIGGALLSAGKSALKGLAKGLAEHFASGKRTAEDHEVMKRLEAVMRDLDSLDYPEEATERETRGFNQEEIANLFTKKEKRILGPVLGLVGNALGGLIKKIG.

Residues 1–18 (MNFKYIVAVSFLIASAYA) form the signal peptide. The propeptide occupies 19–43 (RSVKNDEQSLSQRDVLDEESLREFR). S70 carries the post-translational modification Serine amide. Residues 74 to 123 (TAEDHEVMKRLEAVMRDLDSLDYPEEATERETRGFNQEEIANLFTKKEKR) constitute a propeptide that is removed on maturation. Isoleucine amide is present on I143.

Belongs to the bombinin family. In terms of tissue distribution, expressed by the skin glands.

It is found in the secreted. Functionally, maximin-10 shows antimicrobial activity against bacteria and against the fungus C.albicans. It has little hemolytic activity. Its function is as follows. Maximin-H3 shows antibacterial activity against both Gram-positive and Gram-negative bacteria. It also shows antimicrobial activity against the fungus C.albicans. Shows strong hemolytic activity. The chain is Maximins 10/H3 from Bombina maxima (Giant fire-bellied toad).